Reading from the N-terminus, the 845-residue chain is MTPRSRLATLGTVILLVCFCAGAAHSRGDTFQTSSSPTPPGSSSKAPTKPGEEASGPKSVDFYQFRVCSASITGELFRFNLEQTCPDTKDKYHQEGILLVYKKNIVPHIFKVRRYRKIATSVTVYRGLTESAITNKYELPRPVPLYEISHMDSTYQCFSSMKVNVNGVENTFTDRDDVNTTVFLQPVEGLTDNIQRYFSQPVIYAEPGWFPGIYRVRTTVNCEIVDMIARSAEPYNYFVTSLGDTVEVSPFCYNESSCSTTPSNKNGLSVQVVLNHTVVTYSDRGTSPTPQNRIFVETGAYTLSWASESKTTAVCPLALWKTFPRSIQTTHEDSFHFVANEITATFTAPLTPVANFTDTYSCLTSDINTTLNASKAKLASTHVPNGTVQYFHTTGGLYLVWQPMSAINLTHAQGDSGNPTSSPPPSASPMTTSASRRKRRSASTAAAGGGGSTDNLSYTQLQFAYDKLRDGINQVLEELSRAWCREQVRDNLMWYELSKINPTSVMTAIYGRPVSAKFVGDAISVTECINVDQSSVNIHKSLRTNSKDVCYARPLVTFKFLNSSNLFTGQLGARNEIILTNNQVETCKDTCEHYFITRNETLVYKDYAYLRTINTTDISTLNTFIALNLSFIQNIDFKAIELYSSAEKRLASSVFDLETMFREYNYYTHRLAGLREDLDNTIDMNKERFVRDLSEIVADLGGIGKTVVNVASSVVTLCGSLVTGFINFIKHPLGGMLMIIIVIAIILIIFMLSRRTNTIAQAPVKMIYPDVDRRAPPSGGAPTREEIKNILLGMHQLQQEERQKADDLKKSTPSVFQRTANGLRQRLRGYKPLTQSLDISPETGE.

Positions 1–26 (MTPRSRLATLGTVILLVCFCAGAAHS) are cleaved as a signal peptide. Topologically, residues 27-732 (RGDTFQTSSS…TGFINFIKHP (706 aa)) are virion surface. Residues 29–57 (DTFQTSSSPTPPGSSSKAPTKPGEEASGP) form a disordered region. The segment covering 33 to 49 (TSSSPTPPGSSSKAPTK) has biased composition (low complexity). 5 cysteine pairs are disulfide-bonded: Cys-68/Cys-528, Cys-85/Cys-484, Cys-157/Cys-222, Cys-315/Cys-362, and Cys-550/Cys-587. The segment at 124–130 (VYRGLTE) is involved in fusion and/or binding to host membrane. An N-linked (GlcNAc...) asparagine; by host glycan is attached at Asn-179. The tract at residues 208 to 216 (GWFPGIYRV) is involved in fusion and/or binding to host membrane. Asn-254, Asn-275, Asn-355, Asn-368, Asn-372, Asn-385, and Asn-408 each carry an N-linked (GlcNAc...) asparagine; by host glycan. Residues 411-451 (HAQGDSGNPTSSPPPSASPMTTSASRRKRRSASTAAAGGGG) are disordered. Asn-455, Asn-562, Asn-599, Asn-614, and Asn-628 each carry an N-linked (GlcNAc...) asparagine; by host glycan. The segment at 678 to 730 (LDNTIDMNKERFVRDLSEIVADLGGIGKTVVNVASSVVTLCGSLVTGFINFIK) is hydrophobic membrane proximal region. A helical transmembrane segment spans residues 733–753 (LGGMLMIIIVIAIILIIFMLS). Residues 754-845 (RRTNTIAQAP…SLDISPETGE (92 aa)) lie on the Intravirion side of the membrane. A disordered region spans residues 802 to 845 (RQKADDLKKSTPSVFQRTANGLRQRLRGYKPLTQSLDISPETGE). The segment covering 811-822 (STPSVFQRTANG) has biased composition (polar residues). An Internalization motif motif is present at residues 830-833 (YKPL).

It belongs to the herpesviridae glycoprotein B family. Homotrimer; disulfide-linked. Binds to heparan sulfate proteoglycans. Interacts with gH/gL heterodimer. Interacts with host ITGAV-ITGB3; this interaction mediates viral entry. In terms of processing, a proteolytic cleavage by host furin generates two subunits that remain linked by disulfide bonds.

Its subcellular location is the virion membrane. The protein resides in the host cell membrane. It localises to the host endosome membrane. The protein localises to the host Golgi apparatus membrane. Functionally, envelope glycoprotein that forms spikes at the surface of the virion envelope. Participates in viral entry through an RGD motif that binds ITGAV-ITGB3. Membrane fusion is mediated by the fusion machinery composed at least of gB and the heterodimer gH/gL. May be involved in the fusion between the virion envelope and the outer nuclear membrane during virion egress. The polypeptide is Envelope glycoprotein B (Homo sapiens (Human)).